The following is a 762-amino-acid chain: Subtilisin-like protease SBT3.11 (762 aa).

An N-terminal signal peptide occupies residues 1–16 (MMSSIVSWWFFWVISA). A propeptide spans 17–116 (VCILKVEFNI…VTPNTFYELQ (100 aa)) (activation peptide). One can recognise an Inhibitor I9 domain in the interval 37-115 (VHIVYLGEKE…QVTPNTFYEL (79 aa)). The Peptidase S8 domain maps to 120–609 (TFDYLGLSHS…GGLVNPNKAA (490 aa)). The active-site Charge relay system is Asp150. Asn206 carries an N-linked (GlcNAc...) asparagine glycan. His226 serves as the catalytic Charge relay system. 2 N-linked (GlcNAc...) asparagine glycosylation sites follow: Asn241 and Asn371. The active-site Charge relay system is the Ser540.

The protein belongs to the peptidase S8 family.

It localises to the secreted. This is Subtilisin-like protease SBT3.11 from Arabidopsis thaliana (Mouse-ear cress).